Consider the following 266-residue polypeptide: MKLSLSSPPYADAPVVVLISGLGGSGSYWLPQLAVLEQEYQVVCYDQRGTGNNPDTLAEDYSIAQMAAELHQALVAAGIERYAVVGHALGALVGMQLALDYPASVTMLVSVNGWLRINAHTRRCFQVRERLLYSGGAQAWVEAQPLFLYPADWMAARAPRLEAEDALALAHFQGKNNLLRRLNALKRADFSHHADRIRCPVQIICASDDLLVPTACSSELHAALPDSQKMVMPYGGHACNVTDPETFNALLLNGLASLLHHREAAL.

An AB hydrolase-1 domain is found at 14–115 (PVVVLISGLG…TMLVSVNGWL (102 aa)).

It belongs to the AB hydrolase superfamily. Hydrolase RutD family.

It carries out the reaction carbamate + 2 H(+) = NH4(+) + CO2. Involved in pyrimidine catabolism. May facilitate the hydrolysis of carbamate, a reaction that can also occur spontaneously. This is Putative carbamate hydrolase RutD from Shigella flexneri serotype X (strain 2002017).